We begin with the raw amino-acid sequence, 233 residues long: Transcriptional regulatory protein PrrA (233 aa).

The Response regulatory domain maps to 9–123 (RVLVVDDDSD…ELVARVKALL (115 aa)). Asp58 is subject to 4-aspartylphosphate. The segment at residues 134–232 (SETITVGPLE…VRGVGFVLRM (99 aa)) is a DNA-binding region (ompR/PhoB-type).

In terms of processing, phosphorylated by PrrB at Asp-58.

It is found in the cytoplasm. Member of the two-component regulatory system PrrB/PrrA that is involved specifically in early intracellular multiplication of Mycobacterium and is essential for its viability. Upon phosphorylation by PrrB, functions as a transcription regulator by direct binding to promoter regions of target genes to positively regulate their expression. Autoregulates its own expression. This chain is Transcriptional regulatory protein PrrA (prrA), found in Mycobacterium bovis (strain ATCC BAA-935 / AF2122/97).